A 204-amino-acid polypeptide reads, in one-letter code: LexA repressor (204 aa).

The H-T-H motif DNA-binding region spans V27–A47. Active-site for autocatalytic cleavage activity residues include S126 and K164.

It belongs to the peptidase S24 family. Homodimer.

The catalysed reaction is Hydrolysis of Ala-|-Gly bond in repressor LexA.. Its function is as follows. Represses a number of genes involved in the response to DNA damage (SOS response), including recA and lexA. In the presence of single-stranded DNA, RecA interacts with LexA causing an autocatalytic cleavage which disrupts the DNA-binding part of LexA, leading to derepression of the SOS regulon and eventually DNA repair. The protein is LexA repressor of Listeria welshimeri serovar 6b (strain ATCC 35897 / DSM 20650 / CCUG 15529 / CIP 8149 / NCTC 11857 / SLCC 5334 / V8).